We begin with the raw amino-acid sequence, 77 residues long: uncharacterized protein (77 aa).

This is an uncharacterized protein from Treponema pallidum (strain Nichols).